A 319-amino-acid chain; its full sequence is Acetyl esterase (319 aa).

The short motif at 91-93 (HGG) is the Involved in the stabilization of the negatively charged intermediate by the formation of the oxyanion hole element. Catalysis depends on residues Ser165, Asp262, and His292.

The protein belongs to the 'GDXG' lipolytic enzyme family. As to quaternary structure, homodimer. Interacts with MalT and MelA.

It is found in the cytoplasm. Displays esterase activity towards short chain fatty esters (acyl chain length of up to 8 carbons). Able to hydrolyze triacetylglycerol (triacetin) and tributyrylglycerol (tributyrin), but not trioleylglycerol (triolein) or cholesterol oleate. Negatively regulates MalT activity by antagonizing maltotriose binding. Inhibits MelA galactosidase activity. In Escherichia coli O157:H7, this protein is Acetyl esterase.